The chain runs to 480 residues: 3-isopropylmalate dehydratase large subunit (480 aa).

[4Fe-4S] cluster is bound by residues Cys-357, Cys-417, and Cys-420. Positions 431–441 are enriched in polar residues; sequence GQRCASTSNRN. Positions 431 to 454 are disordered; it reads GQRCASTSNRNFEGRQGKGGRTHL.

The protein belongs to the aconitase/IPM isomerase family. LeuC type 1 subfamily. As to quaternary structure, heterodimer of LeuC and LeuD. The cofactor is [4Fe-4S] cluster.

It catalyses the reaction (2R,3S)-3-isopropylmalate = (2S)-2-isopropylmalate. Its pathway is amino-acid biosynthesis; L-leucine biosynthesis; L-leucine from 3-methyl-2-oxobutanoate: step 2/4. Its function is as follows. Catalyzes the isomerization between 2-isopropylmalate and 3-isopropylmalate, via the formation of 2-isopropylmaleate. In Mycobacteroides abscessus (strain ATCC 19977 / DSM 44196 / CCUG 20993 / CIP 104536 / JCM 13569 / NCTC 13031 / TMC 1543 / L948) (Mycobacterium abscessus), this protein is 3-isopropylmalate dehydratase large subunit.